A 71-amino-acid polypeptide reads, in one-letter code: Protein SlyX homolog (71 aa).

It belongs to the SlyX family.

This is Protein SlyX homolog from Stutzerimonas stutzeri (strain A1501) (Pseudomonas stutzeri).